We begin with the raw amino-acid sequence, 204 residues long: Shikimate kinase (204 aa).

35–40 (ASGKST) contributes to the ATP binding site. S39 serves as a coordination point for Mg(2+). 3 residues coordinate substrate: D57, R81, and G103. Position 142 (R142) interacts with ATP. A substrate-binding site is contributed by R169.

It belongs to the shikimate kinase family. In terms of assembly, monomer. Mg(2+) serves as cofactor.

The protein resides in the cytoplasm. The catalysed reaction is shikimate + ATP = 3-phosphoshikimate + ADP + H(+). It participates in metabolic intermediate biosynthesis; chorismate biosynthesis; chorismate from D-erythrose 4-phosphate and phosphoenolpyruvate: step 5/7. Catalyzes the specific phosphorylation of the 3-hydroxyl group of shikimic acid using ATP as a cosubstrate. This is Shikimate kinase from Salinibacter ruber (strain DSM 13855 / M31).